A 252-amino-acid chain; its full sequence is Thiamine thiazole synthase (252 aa).

Residues serine 35, 54–55, glycine 62, valine 126, and 152–154 each bind NAD(+); these read EK and HVD. Fe cation-binding residues include aspartate 154 and histidine 169. Methionine 217 contacts NAD(+). Arginine 227 lines the glycine pocket.

Belongs to the THI4 family. In terms of assembly, homooctamer; tetramer of dimers. The cofactor is Fe(2+).

The enzyme catalyses hydrogen sulfide + glycine + NAD(+) = ADP-5-ethyl-4-methylthiazole-2-carboxylate + nicotinamide + 3 H2O + H(+). It participates in cofactor biosynthesis; thiamine diphosphate biosynthesis. In terms of biological role, involved in the biosynthesis of the thiazole moiety of thiamine. Catalyzes the conversion of NAD and glycine to adenosine diphosphate 5-(2-hydroxyethyl)-4-methylthiazole-2-carboxylate (ADT), an adenylated thiazole intermediate, using free sulfide as a source of sulfur. The sequence is that of Thiamine thiazole synthase from Pyrococcus furiosus (strain ATCC 43587 / DSM 3638 / JCM 8422 / Vc1).